We begin with the raw amino-acid sequence, 656 residues long: MIKSQKEYLERIEYLNTLSHHYYNLDESIVSDAVYDELYQELKAYEEKNPNDIQANSPTQKVGATTTTPFSKNPHLMRMWSLDDVFNQSELQAWLQRILKVYPNASFVCSPKLDGVSLNLLYHHGKLVSATTRGNGLEGELVTNNAKHIANIPHFIAYDGEIEIRGEVIISKEDFEALNKERLEANEPLFANPRNAASGSLRQLDSEITKKRKLQFIPWGVGKHSLNFLSFKECLDFIVSLGFGAIQYLSLNKNHQEIEESYHTLIKEREGFFALLDGMVIVVNELGIQKELGYTQKSPKFACAYKFPALEKHTKIIGVINQVGRSGAITPVALLEPVEIAGAMVNRATLHNYSEIEKKNIMLNDRVVVIRSGDVIPKIIKPLETYRDGSQHKIERPKVCPICSHELLCEEIFTYCQNLNCPARLKESLIHFASKDALNIQGLGDKVIEQLFEEKLIVNALDLYALKLEDLMRLDKFKIKKAQNLLDAIQKSKNPPLWRLINALGIEHIGKGASKTLARYGLNVLEKSEAEFLEMEGFGVEMAHSLVNFYASNQEFIRSLFDLLNPKNSDMAKEKQKSSSVFNNKTIVLTGTLSKPRQEYAQMLENLGAKISSSVSAKTDFLIVGENPGSKLALAKKHGVSVLNEEELLKRLKELD.

Residues 32-36 (DAVYD) and 81-82 (SL) contribute to the NAD(+) site. Lys112 serves as the catalytic N6-AMP-lysine intermediate. NAD(+) contacts are provided by Arg133, Glu167, and Lys306. Residues Cys400, Cys403, Cys416, and Cys421 each contribute to the Zn(2+) site. Residues 577–656 (KSSSVFNNKT…ELLKRLKELD (80 aa)) enclose the BRCT domain.

Belongs to the NAD-dependent DNA ligase family. LigA subfamily. Mg(2+) is required as a cofactor. It depends on Mn(2+) as a cofactor.

It catalyses the reaction NAD(+) + (deoxyribonucleotide)n-3'-hydroxyl + 5'-phospho-(deoxyribonucleotide)m = (deoxyribonucleotide)n+m + AMP + beta-nicotinamide D-nucleotide.. Its function is as follows. DNA ligase that catalyzes the formation of phosphodiester linkages between 5'-phosphoryl and 3'-hydroxyl groups in double-stranded DNA using NAD as a coenzyme and as the energy source for the reaction. It is essential for DNA replication and repair of damaged DNA. The polypeptide is DNA ligase (Helicobacter pylori (strain P12)).